The following is an 84-amino-acid chain: Acyl carrier protein homolog (84 aa).

The Carrier domain occupies 4 to 79 (HEILLKIKEI…DLVLEVKNLL (76 aa)). Ser-39 carries the post-translational modification O-(pantetheine 4'-phosphoryl)serine.

4'-phosphopantetheine is transferred from CoA to a specific serine of the apo-ACP-like protein.

It functions in the pathway lipid metabolism; fatty acid biosynthesis. Functionally, carrier of the growing fatty acid chain in fatty acid biosynthesis. This is Acyl carrier protein homolog from Mycoplasma genitalium (strain ATCC 33530 / DSM 19775 / NCTC 10195 / G37) (Mycoplasmoides genitalium).